Here is a 194-residue protein sequence, read N- to C-terminus: Phosphoheptose isomerase (194 aa).

The SIS domain occupies 37 to 194 (ISNSFKQGGK…LIEFEMAKQA (158 aa)). 52–54 (NGG) is a binding site for substrate. Residues histidine 61 and glutamate 65 each coordinate Zn(2+). Residues glutamate 65, 93 to 94 (ND), 119 to 121 (STS), serine 124, and glutamine 172 each bind substrate. 2 residues coordinate Zn(2+): glutamine 172 and histidine 180.

This sequence belongs to the SIS family. GmhA subfamily. As to quaternary structure, homotetramer. The cofactor is Zn(2+).

The protein resides in the cytoplasm. The catalysed reaction is 2 D-sedoheptulose 7-phosphate = D-glycero-alpha-D-manno-heptose 7-phosphate + D-glycero-beta-D-manno-heptose 7-phosphate. The protein operates within carbohydrate biosynthesis; D-glycero-D-manno-heptose 7-phosphate biosynthesis; D-glycero-alpha-D-manno-heptose 7-phosphate and D-glycero-beta-D-manno-heptose 7-phosphate from sedoheptulose 7-phosphate: step 1/1. Functionally, catalyzes the isomerization of sedoheptulose 7-phosphate in D-glycero-D-manno-heptose 7-phosphate. This Haemophilus influenzae (strain 86-028NP) protein is Phosphoheptose isomerase.